The primary structure comprises 345 residues: 2-oxoglutarate-dependent ethylene/succinate-forming enzyme (345 aa).

The Fe2OG dioxygenase domain occupies 167–288; sequence GWHHMRVLRF…RFAMAYFHEP (122 aa). Fe cation is bound by residues His191 and His270.

The protein belongs to the iron/ascorbate-dependent oxidoreductase family. Monomer. Fe(2+) serves as cofactor.

The enzyme catalyses 2-oxoglutarate + O2 + 2 H(+) = ethene + 3 CO2 + H2O. The catalysed reaction is L-arginine + 2-oxoglutarate + O2 = guanidine + L-glutamate 5-semialdehyde + succinate + CO2. The protein operates within alkene biosynthesis; ethylene biosynthesis via 2-oxoglutarate. Its function is as follows. Simultaneously catalyzes two reactions, namely formation of ethylene and of succinate from 2-oxoglutarate. This chain is 2-oxoglutarate-dependent ethylene/succinate-forming enzyme (efe), found in Ralstonia nicotianae (strain ATCC BAA-1114 / GMI1000) (Ralstonia solanacearum).